Here is a 1179-residue protein sequence, read N- to C-terminus: Calcium-activated potassium channel subunit alpha-1 (1179 aa).

The segment covering 1-24 has biased composition (gly residues); sequence MANGGGGGGGSSGGGGGGGGGGSG. The interval 1–62 is disordered; it reads MANGGGGGGG…SSSSSSSSSV (62 aa). Over 1–87 the chain is Extracellular; the sequence is MANGGGGGGG…VPCDSRGQRM (87 aa). Residues 41–61 show a composition bias toward low complexity; sequence SSSSSSSSSSSSSSSSSSSSS. Residues 88 to 108 traverse the membrane as a helical segment; sequence WWAFLASSMVTFFGGLFIILL. The Cytoplasmic segment spans residues 109–179; that stretch reads WRTLKYLWTV…MISAQTLTGR (71 aa). S-palmitoyl cysteine attachment occurs at residues cysteine 119, cysteine 120, and cysteine 122. The helical transmembrane segment at 180–200 threads the bilayer; sequence VLVVLVFALSIGALVIYFIDS. Topologically, residues 201–215 are extracellular; the sequence is SNPIESCQNFYKDFT. Residues 216–236 traverse the membrane as a helical segment; that stretch reads LQIDMAFNVFFLLYFGLRFIA. The Cytoplasmic segment spans residues 237 to 240; the sequence is ANDK. Residues 241–261 form a helical membrane-spanning segment; that stretch reads LWFWLEVNSVVDFFTVPPVFV. At 262-265 the chain is on the extracellular side; it reads SVYL. A helical; Voltage-sensor membrane pass occupies residues 266–286; sequence NRSWLGLRFLRALRLIQFSEI. The Cytoplasmic portion of the chain corresponds to 287-301; sequence LQFLNILKTSNSIKL. The helical transmembrane segment at 302–322 threads the bilayer; the sequence is VNLLSIFISTWLTAAGFIHLV. Topologically, residues 323–336 are extracellular; that stretch reads ENSGDPWENFQNNQ. The segment at residues 337-359 is an intramembrane region (pore-forming); that stretch reads ALTYWECVYLLMVTMSTVGYGDV. A Selectivity for potassium motif is present at residues 353 to 356; that stretch reads TVGY. At 360–368 the chain is on the extracellular side; the sequence is YAKTTLGRL. The chain crosses the membrane as a helical span at residues 369–389; that stretch reads FMVFFILGGLAMFASYVPEII. At 390-1179 the chain is on the cytoplasmic side; that stretch reads ELIGNRKKYG…KQKYVQEERL (790 aa). Positions 408–550 constitute an RCK N-terminal 1 domain; the sequence is RKHIVVCGHI…WNWKEGDDAI (143 aa). Mg(2+) contacts are provided by glutamate 440, glutamine 463, and glutamate 465. Residues 557–577 are segment S7; it reads LGFIAQSCLAQGLSTMLANLF. Residues 614-634 form a segment S8 region; it reads LSFPTVCELCFVKLKLLMIAI. The segment at 678 to 682 is heme-binding motif; it reads CKACH. The interval 702-730 is disordered; sequence EQPSTLSPKKKQRNGGMRNSPNSSPKLMR. A Phosphothreonine modification is found at threonine 706. Phosphoserine occurs at positions 708, 721, and 725. Positions 780 to 800 are segment S9; that stretch reads VLSGHVVVCIFGDVSSALIGL. The RCK N-terminal 2 domain occupies 782 to 926; the sequence is SGHVVVCIFG…MDRSSPDNSP (145 aa). A Phosphothreonine modification is found at threonine 913. Phosphoserine occurs at positions 921 and 925. A Calcium bowl motif is present at residues 946 to 968; that stretch reads TELVNDTNVQFLDQDDDDDPDTE. The Ca(2+) site is built by glutamine 955, aspartate 958, aspartate 961, and aspartate 963. Residues 975 to 995 are segment S10; the sequence is FACGTAFAVSVLDSLMSATYF. The span at 1129–1154 shows a compositional bias: low complexity; sequence RASLSHSSHSSQSSSKKSSSVHSIPS. The disordered stretch occupies residues 1129–1179; that stretch reads RASLSHSSHSSQSSSKKSSSVHSIPSTANRQNRPKSRESRDKQKYVQEERL. The span at 1163 to 1179 shows a compositional bias: basic and acidic residues; it reads KSRESRDKQKYVQEERL. A phosphoserine mark is found at serine 1164 and serine 1167.

The protein belongs to the potassium channel family. Calcium-activated (TC 1.A.1.3) subfamily. KCa1.1/KCNMA1 sub-subfamily. In terms of assembly, homotetramer; which constitutes the calcium-activated potassium channel. Interacts with beta subunits KCNMB1, KCNMB2, KCNMB3 and KCNMB4. Interacts with gamma subunits LRRC26, LRRC38, LRRC52 and LRRC55. Beta and gamma subunits are accessory, and modulate its activity. Interacts with RAB11B. Post-translationally, phosphorylated. Phosphorylation by kinases such as PKA and/or PKG. In smooth muscles, phosphorylation affects its activity. Palmitoylation by ZDHHC22 and ZDHHC23 within the intracellular linker between the S0 and S1 transmembrane domains regulates localization to the plasma membrane. Depalmitoylated by LYPLA1 and LYPLAL1, leading to retard exit from the trans-Golgi network.

Its subcellular location is the cell membrane. The protein resides in the endoplasmic reticulum membrane. It catalyses the reaction K(+)(in) = K(+)(out). Its activity is regulated as follows. Ethanol and carbon monoxide-bound heme increase channel activation. Heme inhibits channel activation. In terms of biological role, potassium channel activated by both membrane depolarization or increase in cytosolic Ca(2+) that mediates export of K(+). It is also activated by the concentration of cytosolic Mg(2+). Its activation dampens the excitatory events that elevate the cytosolic Ca(2+) concentration and/or depolarize the cell membrane. It therefore contributes to repolarization of the membrane potential. Plays a key role in controlling excitability in a number of systems, such as regulation of the contraction of smooth muscle, the tuning of hair cells in the cochlea, regulation of transmitter release, and innate immunity. In smooth muscles, its activation by high level of Ca(2+), caused by ryanodine receptors in the sarcoplasmic reticulum, regulates the membrane potential. In cochlea cells, its number and kinetic properties partly determine the characteristic frequency of each hair cell and thereby helps to establish a tonotopic map. Kinetics of KCNMA1 channels are determined by alternative splicing, phosphorylation status and its combination with modulating beta subunits. Highly sensitive to both iberiotoxin (IbTx) and charybdotoxin (CTX). Potassium channel activated by both membrane depolarization or increase in cytosolic Ca(2+) that mediates export of K(+). The sequence is that of Calcium-activated potassium channel subunit alpha-1 (KCNMA1) from Oryctolagus cuniculus (Rabbit).